Here is a 424-residue protein sequence, read N- to C-terminus: 5-methylthioadenosine/S-adenosylhomocysteine deaminase (424 aa).

Residues His-60 and His-62 each coordinate Zn(2+). Residues Glu-89 and His-181 each coordinate substrate. Zn(2+) is bound at residue His-208. Glu-211 and Asp-296 together coordinate substrate. Asp-296 contacts Zn(2+).

Belongs to the metallo-dependent hydrolases superfamily. MTA/SAH deaminase family. Zn(2+) serves as cofactor.

It carries out the reaction S-adenosyl-L-homocysteine + H2O + H(+) = S-inosyl-L-homocysteine + NH4(+). It catalyses the reaction S-methyl-5'-thioadenosine + H2O + H(+) = S-methyl-5'-thioinosine + NH4(+). Functionally, catalyzes the deamination of 5-methylthioadenosine and S-adenosyl-L-homocysteine into 5-methylthioinosine and S-inosyl-L-homocysteine, respectively. Is also able to deaminate adenosine. This is 5-methylthioadenosine/S-adenosylhomocysteine deaminase from Thermococcus sibiricus (strain DSM 12597 / MM 739).